The primary structure comprises 63 residues: Large ribosomal subunit protein bL32 (63 aa).

A compositionally biased stretch (basic residues) spans 1-16 (MAVPKRKTSRMKRGFR). Residues 1–22 (MAVPKRKTSRMKRGFRRSADAI) form a disordered region.

The protein belongs to the bacterial ribosomal protein bL32 family.

This chain is Large ribosomal subunit protein bL32, found in Beijerinckia indica subsp. indica (strain ATCC 9039 / DSM 1715 / NCIMB 8712).